A 2521-amino-acid polypeptide reads, in one-letter code: MENSYDDQSIAVIGLSCRFPGDADNVERFWNLLREGQSAISTVPGNRWNSRRFQDDKNHSQNTSRTNRAHFLKEDVSAFDANFFSISKSEAVSMDPQQRLMLEVSYEAFENAGLAVESLAQSQMGCWVSSFSQDWREMQFSDLQSVPKYAMSGMQPEMLANRVSYFFDLHGPSMALETACSGSLVGLHVACQSLRSGECDAALVGGANLFLNPNMFLALSNQNFLAPDGLSKAFDASANGYGRGEGFAAVILKPVEKAIRDGDPIRAVIRATGTNQDGRTKGLTMPNGDAQETLIRSTYRSAGLELKDTAYFEAHGTGTQVGDFEELSAIARTVADARKREGLEELWVGSAKTNIGHLEATAGLAGVLKAILVLENGVIPPNLHFKNPNPRIPFQEYHIRVPTQEVTWNPDTIRRVSVNSFGFGGSNAHAIIDNGKQYLHQRRSKATLVNGTHAADDKELKPEVPQIFVINSSDQEGLGRQRSALRHYLANFGKEGRANSGWFRDLAFTLGKKRCRLPWRSFCTASTVLELSEALEATDFPKIRSGTAALRLAYVFTGQGAQWAQMGLELFQFPTFKQSVVAADSHLKKLGCPWSVVEELQRSGAESNIHVSWYSQTLCTVLQVALVELLQSWGITPRSVVGHSSGEMAAAFAIGALAREDAWKIAYWRGKLSSELTERAPDLSGAMMAVGASHEQAQKWVEGLTRGKCVVACINSPSSVTVSGDDAGLDELAAMLKEKEVFARKLKVTTAYHSHHMKVVAEAYHDVLKDVEVRNVPTDGPQMFTSVSETLVNPSDLDASHWVANLVSPVLFSNTVAELARAKTPKDQATGSAVDLMLEIGPHAALRGPVTQILQAKGLRNVEYQSLLSRGCNAIQTTLAAVADLICRGVTADIDAVNNAHTPQGAGHKTMPANTLTTLPPYAWNHSRTFWTESRMLREAKAVNDSPSSFIGLPMPSFVANEHIWRGFLRLEHVPWVRHHKMQSAVLFPAGGFLAMAIEGASQFQGKDNSRVAKGYKLRDVRIDSAVILTEESNIEHILQLRPHDTARSQQTDSYDGWWEFKISTSAGSDESLKCNCYGLVTVEFEQLIHPSHASKASSTTVQQAEAFYERLESVGLEYGPSFQAIKTILHSSGGQTEGEIEIMDIDVNSTTPGGSDGRPYVVHPTTLEALFQMAYAAFDNQSDGVKKALLVTDIEELLLDASISHTPGARLQTSARSSRLGFREMLADVTVSPTASNAGGISVRGLTCVEMPSTAGVNSDVGITGREGYDSMLSKFVWKPALNLLSATEREHLLIAATKVTDAETEAILAREAADFQNVKSALQASQRGKTGSLKLRNALKWISQELPDAKVFGKALENVSQDGQGAGPTGPIVDVLSGTSTPDVLLSGYGSTEKFLAALPGVKVSLQKMYQLVSIMAHENPDLAVLEIGSGSSGEEDTSIFSTTDIPTTIKYTRAVATPEILRNLQEFSPPAGPIPRFTVLDLEQDLADQGIDLASFDIIIGNNVLSNSRNVENVLRRTKSLLRDEGNMCFVELTKPSSRAVPVLGVVCDWWKRGDDGLRRPLSSDSIKDILTEQGFTLDFLSPDFVDPAIQQSSLVFASSSAENLPTASATDDADDEEIYILISPELKSPDAVVQNVASSFQHSQIVTWGAGVDFKGKYIISLLELYDPFINHLTEEDFDILKKLVTQASSLLWVTGIPEPHASTILGFARVVRFEIPSLDFRVLTLDPATIEDAKKNSIHISQVQRSKSPDKEYKELDSIVHIPRVTVDASLNHQISNLCLSEAIESKPLGSLERPQKLCIRNPGMLNTLCFQADNVSENELQDDEVEVRVMASGLNSKDVMVALGHITDTHLGLEASGVVLRVGASVTHLQLGDKVVMLANGAHRTTLRGKAAVCQKIPQDMTYEEAAGFPFAYCTAYYTLLHVLRAQSGQSVLIHAAAGAVGQALVRLAQHLGLEVFTTAESADDRAFVQELLGLFPDRIYHPQDKGLVQHVMRITGDVGVDFIVNPLSVEEIADSLNCLADFGTFVEMGMENDSRHSTLNTRLFRRDTTFVAVNLQRVLELRPKLIGEILQKALGLFQDGQVKSVSPSNVYPVSEAEAAIQMFQDNRHHGKITLSYSSEDFVSVLQNPKDSLKLSPDNTYLIAGGLGGIGRSLATLLVDCGARHIAMVSRSGVTSVEQQQLIDNLSERGAKIGVYKCSIGDANALGRALTQCASEMPPIKGIIHSAVVFRDAVLHNMTYKQWDELLDGKLRGSWNLHALTTSYNLDFFLCIGSFMAIIGGISQSNYAAGSAFQDGLAHLRQSQGLPAVTIDLGIVKGFGAVEEQGAVGHTLEWREPFGVSEPEVHALIKGALLGQRGNWALDVPAQMINSIPTGGMVRSSGVSQPYYFDDPRFSIMAKIGMDSENSDTQASVSLKELLADAESSDDAVLFVTGAVISKVAKLMQVAEEEIDTGKSLHAYGVDSLVAVEYVSWAKKEVSADITVFDVMASKPIMSFARDLVGKGKWGAAIPACKS.

A Ketosynthase family 3 (KS3) domain is found at 7–434 (DQSIAVIGLS…GSNAHAIIDN (428 aa)). The segment at 47–66 (RWNSRRFQDDKNHSQNTSRT) is disordered. Catalysis depends on for beta-ketoacyl synthase activity residues cysteine 180, histidine 315, and histidine 357. One can recognise a Malonyl-CoA:ACP transacylase (MAT) domain in the interval 554-855 (YVFTGQGAQW…LRGPVTQILQ (302 aa)). Residues 948–1088 (SSFIGLPMPS…GLVTVEFEQL (141 aa)) form an N-terminal hotdog fold region. The 311-residue stretch at 948 to 1258 (SSFIGLPMPS…CVEMPSTAGV (311 aa)) folds into the PKS/mFAS DH domain. The tract at residues 949–1256 (SFIGLPMPSF…LTCVEMPSTA (308 aa)) is dehydratase (DH) domain. Residues 1100–1258 (TTVQQAEAFY…CVEMPSTAGV (159 aa)) form a C-terminal hotdog fold region. An Enoyl reductase (ER) domain is found at 1809-2121 (GMLNTLCFQA…DNRHHGKITL (313 aa)). The Ketoreductase (KR) domain maps to 2146 to 2323 (TYLIAGGLGG…AVTIDLGIVK (178 aa)). The Carrier domain maps to 2433-2510 (DAVLFVTGAV…SFARDLVGKG (78 aa)). Serine 2470 is modified (O-(pantetheine 4'-phosphoryl)serine).

Requires pantetheine 4'-phosphate as cofactor.

It participates in secondary metabolite biosynthesis. In terms of biological role, partially reducing polyketide synthase; part of the gene cluster that mediates the biosynthesis of polyesters containing 2,4-dihydroxy-6-(2-hydroxypropyl)benzoate and 3-hydroxybutyrate moieties, such as talapolyester G, 15G256beta and 15G256beta-2; as well as to oxidized derivatives such as 15G256alpha. The biosynthesis of the polyesters probably starts with the formation of the diketide 3-hydroxybutyryl-S-ACP catalyzed by the partially reducing polyketide synthase tpeA. The acceptance of 3-hydroxybutyryl by the non-reducing polyketide synthase tpeB would initiate further elongation and cyclization, catalyzed by KS and PT, respectively, to form 2,4-dihydroxy-6-(2-hydroxyn-propyl)benzoyl-S-ACP intermediate. The TE domain could catalyze lactonization at this step to yield 6-hydroxymellein as a derailment product. The polyesterification process maybe occurs when additional molecules of 3-hydroxybutyryl are transferred to tpeB. Following the first esterification step, an intramolecular cyclization catalyzed by the TE domain of tpeB would give talarodioxadione 1, whereas the ethyl esterification of talapolyester G perhaps happens spontaneously. Further oxidation by the cytochrome P450 monooxygenase tpeC then leads to the formation of oxidized derivatives. The polypeptide is Partially reducing polyketide synthase tpeA (Talaromyces stipitatus (strain ATCC 10500 / CBS 375.48 / QM 6759 / NRRL 1006) (Penicillium stipitatum)).